The primary structure comprises 292 residues: F-box protein SKIP28 (292 aa).

The F-box; degenerate domain occupies 21-79 (LIVLPYLHSLFELLSMIRVSRSLRDAIRDETALWTKLVIEPPLSSRLTDDILSEFSSKS).

Part of a SCF (ASK-cullin-F-box) protein ligase complex. Interacts with SKP1A/ASK1 and CUL1.

It participates in protein modification; protein ubiquitination. In terms of biological role, component of SCF(ASK-cullin-F-box) E3 ubiquitin ligase complexes, which may mediate the ubiquitination and subsequent proteasomal degradation of target proteins. Required during the endosperm development in embryos. This Arabidopsis thaliana (Mouse-ear cress) protein is F-box protein SKIP28 (SKIP28).